Consider the following 28-residue polypeptide: Conotoxin Cal6.43b (28 aa).

Intrachain disulfides connect Cys3/Cys13, Cys7/Cys19, and Cys12/Cys25.

Expressed by the venom duct.

It localises to the secreted. Its function is as follows. Probable neurotoxin with unknown target. Possibly targets ion channels. The chain is Conotoxin Cal6.43b from Californiconus californicus (California cone).